The following is a 454-amino-acid chain: Arginine biosynthesis bifunctional protein ArgJ, mitochondrial (454 aa).

Substrate contacts are provided by Thr184, Lys213, Thr224, Glu311, Asn449, and Thr454. The Nucleophile role is filled by Thr224.

Belongs to the ArgJ family. In terms of assembly, heterodimer of an alpha and a beta chain. Post-translationally, the alpha and beta chains are autoproteolytically processed from a single precursor protein within the mitochondrion.

The protein resides in the mitochondrion matrix. It carries out the reaction N(2)-acetyl-L-ornithine + L-glutamate = N-acetyl-L-glutamate + L-ornithine. The catalysed reaction is L-glutamate + acetyl-CoA = N-acetyl-L-glutamate + CoA + H(+). The protein operates within amino-acid biosynthesis; L-arginine biosynthesis; L-ornithine and N-acetyl-L-glutamate from L-glutamate and N(2)-acetyl-L-ornithine (cyclic): step 1/1. It functions in the pathway amino-acid biosynthesis; L-arginine biosynthesis; N(2)-acetyl-L-ornithine from L-glutamate: step 1/4. Functionally, catalyzes two activities which are involved in the cyclic version of arginine biosynthesis: the synthesis of acetylglutamate from glutamate and acetyl-CoA, and of ornithine by transacetylation between acetylornithine and glutamate. This is Arginine biosynthesis bifunctional protein ArgJ, mitochondrial from Aspergillus clavatus (strain ATCC 1007 / CBS 513.65 / DSM 816 / NCTC 3887 / NRRL 1 / QM 1276 / 107).